Reading from the N-terminus, the 672-residue chain is tRNA(Met) cytidine acetyltransferase TmcA (672 aa).

ATP contacts are provided by residues glutamine 180, glycine 202–glutamine 211, and arginine 319. The 183-residue stretch at isoleucine 349–leucine 531 folds into the N-acetyltransferase domain. Acetyl-CoA contacts are provided by residues isoleucine 461 to valine 463, glutamine 468 to glutamine 474, and arginine 506.

It belongs to the RNA cytidine acetyltransferase family. TmcA subfamily.

It localises to the cytoplasm. It catalyses the reaction cytidine(34) in elongator tRNA(Met) + acetyl-CoA + ATP + H2O = N(4)-acetylcytidine(34) in elongator tRNA(Met) + ADP + phosphate + CoA + H(+). Its function is as follows. Catalyzes the formation of N(4)-acetylcytidine (ac(4)C) at the wobble position of tRNA(Met), by using acetyl-CoA as an acetyl donor and ATP (or GTP). The protein is tRNA(Met) cytidine acetyltransferase TmcA of Salmonella typhimurium (strain LT2 / SGSC1412 / ATCC 700720).